An 897-amino-acid polypeptide reads, in one-letter code: Molybdenum import ATP-binding protein ModC 2 (897 aa).

Positions 6–236 (RGRIDAAFRG…PALPLAYSRD (231 aa)) constitute an ABC transporter domain. 38–45 (GPSGCGKT) serves as a coordination point for ATP. A Mop domain is found at 295 to 365 (ESSILNILPA…VKGVSLVRAS (71 aa)). The tract at residues 823–848 (LGDRSVLGPREPDAGAKGRKRQNDPE) is disordered. A compositionally biased stretch (basic and acidic residues) spans 832 to 848 (REPDAGAKGRKRQNDPE).

This sequence belongs to the ABC transporter superfamily. Molybdate importer (TC 3.A.1.8) family. As to quaternary structure, the complex is composed of two ATP-binding proteins (ModC), two transmembrane proteins (ModB) and a solute-binding protein (ModA).

The protein localises to the cell inner membrane. It catalyses the reaction molybdate(out) + ATP + H2O = molybdate(in) + ADP + phosphate + H(+). Part of the ABC transporter complex ModABC involved in molybdenum import. Responsible for energy coupling to the transport system. The polypeptide is Molybdenum import ATP-binding protein ModC 2 (Bradyrhizobium diazoefficiens (strain JCM 10833 / BCRC 13528 / IAM 13628 / NBRC 14792 / USDA 110)).